The following is a 393-amino-acid chain: NAD(P)H-quinone oxidoreductase subunit H, chloroplastic (393 aa).

Belongs to the complex I 49 kDa subunit family. As to quaternary structure, NDH is composed of at least 16 different subunits, 5 of which are encoded in the nucleus.

It localises to the plastid. It is found in the chloroplast thylakoid membrane. It carries out the reaction a plastoquinone + NADH + (n+1) H(+)(in) = a plastoquinol + NAD(+) + n H(+)(out). The enzyme catalyses a plastoquinone + NADPH + (n+1) H(+)(in) = a plastoquinol + NADP(+) + n H(+)(out). Its function is as follows. NDH shuttles electrons from NAD(P)H:plastoquinone, via FMN and iron-sulfur (Fe-S) centers, to quinones in the photosynthetic chain and possibly in a chloroplast respiratory chain. The immediate electron acceptor for the enzyme in this species is believed to be plastoquinone. Couples the redox reaction to proton translocation, and thus conserves the redox energy in a proton gradient. This chain is NAD(P)H-quinone oxidoreductase subunit H, chloroplastic, found in Nicotiana tomentosiformis (Tobacco).